A 337-amino-acid chain; its full sequence is MTEINEKSLLKQALAEIKKKFGNESIMVLGEKPPIDTEVFSSGSMAIDMALGIGGFPKGRIVEIYGPESSGKTTISLHAIAEVQKQGGIAAFIDAEHSIDPQYAKNLGIDIDNLILSQPDSGEQALDIVDTLTKTKAIDLIVVDSVAALVPMAELQGEMKDQVIGAQARLMSKALRKITASLNKNGTTVIFINQIREKVGVIFGNPETTPGGRGLKFYASIRLDVRKIQQITSGNDITGHSVKIKVVKNKLAIPFKTALVEIVFAKGISKSAEIAQLGEELGILVRKGSWFAYKGENIAQGKVNLKLLLENNTKLFNEIKDQIIEKLKENQQQSQTL.

66 to 73 (GPESSGKT) contacts ATP.

It belongs to the RecA family.

It is found in the cytoplasm. Functionally, can catalyze the hydrolysis of ATP in the presence of single-stranded DNA, the ATP-dependent uptake of single-stranded DNA by duplex DNA, and the ATP-dependent hybridization of homologous single-stranded DNAs. It interacts with LexA causing its activation and leading to its autocatalytic cleavage. This is Protein RecA from Mesomycoplasma hyopneumoniae (strain J / ATCC 25934 / NCTC 10110) (Mycoplasma hyopneumoniae).